Consider the following 192-residue polypeptide: Xanthine phosphoribosyltransferase (192 aa).

Residues Leu-20 and Asn-27 each coordinate xanthine. A 5-phospho-alpha-D-ribose 1-diphosphate-binding site is contributed by Ala-128–Ala-132. Lys-156 lines the xanthine pocket.

Belongs to the purine/pyrimidine phosphoribosyltransferase family. Xpt subfamily. Homodimer.

The protein localises to the cytoplasm. The catalysed reaction is XMP + diphosphate = xanthine + 5-phospho-alpha-D-ribose 1-diphosphate. It participates in purine metabolism; XMP biosynthesis via salvage pathway; XMP from xanthine: step 1/1. Functionally, converts the preformed base xanthine, a product of nucleic acid breakdown, to xanthosine 5'-monophosphate (XMP), so it can be reused for RNA or DNA synthesis. The sequence is that of Xanthine phosphoribosyltransferase from Staphylococcus aureus (strain bovine RF122 / ET3-1).